The sequence spans 305 residues: Probable lipid kinase YegS-like (305 aa).

Positions 1–129 (MSERKALLIL…IDLGEVGGQI (129 aa)) constitute a DAGKc domain. ATP-binding positions include T39, 65-71 (GDGTLRD), and T92. Positions 210, 213, and 215 each coordinate Mg(2+). The active-site Proton acceptor is the E268.

This sequence belongs to the diacylglycerol/lipid kinase family. YegS lipid kinase subfamily. Mg(2+) serves as cofactor. Ca(2+) is required as a cofactor.

The protein resides in the cytoplasm. Its function is as follows. Probably phosphorylates lipids; the in vivo substrate is unknown. The sequence is that of Probable lipid kinase YegS-like from Pseudomonas fluorescens (strain Pf0-1).